The following is a 138-amino-acid chain: MDSKKELIFKKENIGLGKRKQSIARVFLLPGDGKIIINKTSGNKYLQYNDNYLNTVWSPLEKLNLEKQFDIVALVQGGGLTGQAQAIQLGVARLLCTMDKENRSILKPFGFLTRDSRIKERKKYGLRKARKAPQYSKR.

The protein belongs to the universal ribosomal protein uS9 family.

The protein localises to the plastid. Its subcellular location is the chloroplast. The sequence is that of Small ribosomal subunit protein uS9c (rps9) from Phaeodactylum tricornutum (strain CCAP 1055/1).